Here is a 359-residue protein sequence, read N- to C-terminus: Phospho-N-acetylmuramoyl-pentapeptide-transferase (359 aa).

10 helical membrane passes run 26 to 46 (TIYA…WLIR), 75 to 95 (GGVL…NLTI), 97 to 117 (YVWL…ADDY), 134 to 154 (LACE…KPGF), 166 to 186 (VLPD…VGAA), 197 to 217 (GLAI…AYFA), 233 to 253 (GVGE…GFLW), 261 to 281 (VFMG…LAIV), 286 to 306 (ILLA…IFQV), and 336 to 356 (KVIV…ISTL).

It belongs to the glycosyltransferase 4 family. MraY subfamily. Requires Mg(2+) as cofactor.

It is found in the cell inner membrane. The enzyme catalyses UDP-N-acetyl-alpha-D-muramoyl-L-alanyl-gamma-D-glutamyl-meso-2,6-diaminopimeloyl-D-alanyl-D-alanine + di-trans,octa-cis-undecaprenyl phosphate = di-trans,octa-cis-undecaprenyl diphospho-N-acetyl-alpha-D-muramoyl-L-alanyl-D-glutamyl-meso-2,6-diaminopimeloyl-D-alanyl-D-alanine + UMP. It functions in the pathway cell wall biogenesis; peptidoglycan biosynthesis. Its function is as follows. Catalyzes the initial step of the lipid cycle reactions in the biosynthesis of the cell wall peptidoglycan: transfers peptidoglycan precursor phospho-MurNAc-pentapeptide from UDP-MurNAc-pentapeptide onto the lipid carrier undecaprenyl phosphate, yielding undecaprenyl-pyrophosphoryl-MurNAc-pentapeptide, known as lipid I. The polypeptide is Phospho-N-acetylmuramoyl-pentapeptide-transferase (Syntrophus aciditrophicus (strain SB)).